The sequence spans 542 residues: La-related protein 7 homolog (542 aa).

Residues 112-239 (VAEELDIKES…KRRFPFNLEQ (128 aa)) form the HTH La-type RNA-binding domain. In terms of domain architecture, RRM spans 247–335 (RTLYIDFLPP…GSIRIITYKK (89 aa)). The region spanning 374-542 (EIKQNCLIKI…KQNITQNYNK (169 aa)) is the xRRM domain.

The protein belongs to the LARP7 family. Component of the telomerase holoenzyme complex, composed of the catalytic core (the catalytic subunit TERT, the telomerase RNA template component TER and TAP65/p65), which is associated with two heterotrimeric subcomplexes: (i) the replication protein A (RPA)-related subcomplex, composed of TEB1, RPA2/TEB2 and RPA3/TEB3 and (ii) the CST-like subcomplex, composed of TAP75/p75, TAP45/p45 and TAP19/p19. TEB1 and the CST-like subcomplex are tethered to the catalytic core by TAP50/p50.

It localises to the chromosome. Its subcellular location is the telomere. Its function is as follows. RNA-binding protein required for assembly of the holoenzyme telomerase ribonucleoprotein (RNP) complex. Telomerase is an essential ribonucleoprotein enzyme that copies new telomeric repeats onto chromosome ends by repetitively synthesizing the short telomere-repeat sequence 5'-TTGGGG-3' using an RNA template component TER. TAP65/p65 specifically binds telomerase RNA template TER and is required for biogenesis and placement of the TER stem-terminus element: TAP65/p65 first protects the 3'-end of TER from degradation and acts as a chaperone to correctly fold TER for protein binding; it then bends TER stem-loop IV to position it for interaction of stem-loop IV with catalytic TERT RNA-binding domain. The chain is La-related protein 7 homolog from Tetrahymena thermophila (strain SB210).